The primary structure comprises 265 residues: 3-methyl-2-oxobutanoate hydroxymethyltransferase (265 aa).

The Mg(2+) site is built by D44 and D83. 3-methyl-2-oxobutanoate is bound by residues 44–45 (DS), D83, and K113. Position 115 (E115) interacts with Mg(2+). The active-site Proton acceptor is E183.

The protein belongs to the PanB family. In terms of assembly, homodecamer; pentamer of dimers. The cofactor is Mg(2+).

It is found in the cytoplasm. The catalysed reaction is 3-methyl-2-oxobutanoate + (6R)-5,10-methylene-5,6,7,8-tetrahydrofolate + H2O = 2-dehydropantoate + (6S)-5,6,7,8-tetrahydrofolate. The protein operates within cofactor biosynthesis; (R)-pantothenate biosynthesis; (R)-pantoate from 3-methyl-2-oxobutanoate: step 1/2. Catalyzes the reversible reaction in which hydroxymethyl group from 5,10-methylenetetrahydrofolate is transferred onto alpha-ketoisovalerate to form ketopantoate. The protein is 3-methyl-2-oxobutanoate hydroxymethyltransferase of Leptospira interrogans serogroup Icterohaemorrhagiae serovar copenhageni (strain Fiocruz L1-130).